A 2254-amino-acid polypeptide reads, in one-letter code: MANCRPLPIGQLPNRIFDTPRLTPGWVWACTSEATFKLEWLQDPVVIRPPDVFVAQGVVDDFFRPKRVLQGDPQLIAQVLLGDANGPLVGPVSMQQLTSLLHEVSQALSDHKHPLANRYTRASLQRYADTLSNYIPLVDILTGPKDLTPRDVLEQLAAGREWECVPDSALKKVFRDMWQYICEGCDSVYIKLQDVKRKMPHIDTTVLKQFIITLTDTISMATALDTKTWLAHILGWLKPTCLVMIMQQHVNSPQGWAATLTALAELYYGIMPLTETLGSVASWVTDKFADMATSTWGKFKSWWDSLYTPQAGNDLIILGGVVGLVYFMVFGDAPTQMFTKKLMRVCGFITSTVAAIKAAMWIVDYFKQREHEHQVRITLARWAALQEVIKQNRCAGLSEVTKLKECCEVLLNEVTELMYKLGASPLAGLIRSTSDVIQTTINELAQLMAYDTQRKPPAMVVFGGPPGIGKTRLVEALAKQLGEVSHFTMTVDHYDTYTGNTVAIWDEFDVDSKQAFIEATIGIVNCAPYPLNCDRPEAKGRVFTSKYVLATTNCPTPVMPDHPRAMAFWRRITFIDVTAPTIEQWLVDNPGRKAPTSLFKDDFSHLQCSVRGYTAYDEKGNTLSGKVARARYVSVNNLLDLIKEKYNSEAADVKHLWFTVPQAIHKQARDIILGWLRFHSYPNTVADNIPLSEVRDPTCFGYVVISDVDPPRHVAEHVAHIEVESILRTDIVGLLREGGGGLFRALKVKSAPRNCIINKVMMQAHHTTLQVLTSQEPHPPNLPRPRRLVFVESPIDIISALRHHVGFCTIPGIVKLITSGVGLGVENLGNFLQSIAGNVRFPLQSECSLLRTPSGDVLFYTSGQAAVWATPARFPIVTPGEASVGKEVCSESSWWDILKALFSTLVVAFGPIATLVLTAHNLAYLNTRENTLSEAKGKNKRGRGARRAIALRDDEYDEWQDIIRDWRKEMTVQQFLDLKERALSGASDPDSQRYNAWLELRAKRLSAGAYQHAVVDIIGKSGHRREVIRTQVMRAPREPKGDTYDSEGRGYVVPMTAQEKHTGWAVHIGNGRLVTCTHVANMCDRVAEVEFKVAETDRDTCIITAPLGHLPSVALGNGPPAFYTTNFHPIRVLDEGSWDTTTTRVTGWRVVINNGTTTAPGDCGQPYLNARRQLVGVHAATSTCGVKKLVSRVQTKKTAKATFPWKGLPVTTMPDAGGLPTGTRYHRSIAWPKLLPEETHAPAPYGVNDPRHPFSQHQMIANNLQPYINTPVALDQTLLQRAVKHTKGYLDQIIGTHRSPNLTYAAAVESMAHDTACGPNLPGRKKDYMTDQGEPIGPLKQMLEEAWDMAHRGVPRRHEYKLALKDELRPIEKNDQGKKRLLWGCDAGVSMIANAVFKPVTERLVDTVPMHPVAVGICMDSPQIEQMNQALTGRVLYCLDYSKWDSTQNPAVTCASVDILASYAEDTPLSSAAIATLCSPAVGRLDDIGLTVTSGLPSGMPFTSVINSVNHMIYFAMAVLEAYEEFKVPYMGNIFDNETIYTYGDDCVYGLTPATASIMPVVVKNLTSYGLVPTAADKSQSIEPTDTPVFLKRTFSQTPFGLRALLDETSLARQCYWVKANRTTDLFEPAAVDVDIRKNQLEVMLAYASQHPRSVFDKLAGMAEVTASAEGYQLVNVNWANAVATYNAWYGGTDGGRAPTNEDEEPEVFVMEAPAPTRSVASNPEGTQNSNESRPVQPAGPMPVAAAQALEMAVATGQINDTIPSVVRETFSTYTNVTWTTRQPTGTLLARMSLGPGLNPYTLHLSAMWAGWGGSFEIKVIISGSGMYAGKLLCALIPPGVDPSAVDQPGAFPHALVDARITDGVTFTLGDVRAVDYHETGVGGAIASLALYVYQPLINPFETAVSAAMVTIETRPGPDFGFTLLKPPNQAMEVGFDPRSLLPRTARTLRGNRFGRPITAVVIVGVAQQINRHFSAEGTTLGWSTAPIGPCVARVNGKHTDNTGRAVFQLGPLSNGPLYPNIINHYPDVAASTIFNTGTAVNDNTTGGGGPMVIFNDVGDVVEDVAYQMRFIASHATSQSPTLIDQINATSMAVCSFGNSRADLNQNQLNVGIELTYTCGNTAINGIVTSFMDRQYTFGPQGPNNIMLWVESVLGTHTGNNTVYSSQPDTVSAALQGQPFNIPDGYMAVWNVNADSADFQIGLRRDGYFVTNGAIGTRMVISEDTTFSFNGMYTLTTPLIGPSGTSGRSIHSSR.

Residues 438-592 (QTTINELAQL…EQWLVDNPGR (155 aa)) form the SF3 helicase domain. 464–471 (GPPGIGKT) lines the ATP pocket. The residue at position 956 (Y956) is an O-(5'-phospho-RNA)-tyrosine. In terms of domain architecture, Peptidase C24 spans 1041–1196 (GDTYDSEGRG…KKLVSRVQTK (156 aa)). Active-site for 3CLpro activity residues include H1078, D1099, and C1163. The RdRp catalytic domain maps to 1434-1559 (RVLYCLDYSK…GLTPATASIM (126 aa)). Positions 1714–1742 (PAPTRSVASNPEGTQNSNESRPVQPAGPM) are disordered. Positions 1719–1734 (SVASNPEGTQNSNESR) are enriched in polar residues.

In terms of assembly, homodimer. Homomultimer. Interacts with host IEF4E; this interaction plays a role in translation of viral proteins. Post-translationally, specific enzymatic cleavages in vivo yield mature proteins. Pro-Pol is first autocatalytically cleaved, then processes the whole polyprotein. VPg is uridylylated by the polymerase and is covalently attached to the 5'-end of the polyadenylated genomic and subgenomic RNAs. This uridylylated form acts as a nucleotide-peptide primer for the polymerase.

Its subcellular location is the virion. The protein resides in the host cytoplasm. It catalyses the reaction a ribonucleoside 5'-triphosphate + H2O = a ribonucleoside 5'-diphosphate + phosphate + H(+). The catalysed reaction is RNA(n) + a ribonucleoside 5'-triphosphate = RNA(n+1) + diphosphate. It carries out the reaction Endopeptidase with a preference for cleavage when the P1 position is occupied by Glu-|-Xaa and the P1' position is occupied by Gly-|-Yaa.. Its function is as follows. Together with NTPase and NS4, initiates the formation of the replication complex. Induces the proliferation of the host smooth ER membranes forming long tubular structures. These remodeled membranes probably form the viral factories that contain the replication complex. Displays NTPase activity, but no helicase activity. Induces the formation of convoluted membranes derived from the host ER. These remodeled membranes probably form the viral factories that contain the replication complex. Together with NS2 and NS4, initiates the formation of the replication complex. Functionally, probable key protein responsible for the formation of membrane alterations by the virus. Induces the formation of convoluted membranes derived from the host ER. These remodeled membranes probably form the viral factories that contain the replication complex. Together with NS2 and NTPase, initiates the formation of the replication complex. In terms of biological role, viral genome-linked protein is covalently linked to the 5'-end of the positive-strand, negative-strand genomic RNAs and subgenomic RNA. Acts as a genome-linked replication primer. May recruit ribosome to viral RNA thereby promoting viral proteins translation. Interacts with host translation initiation complex to allow the translation of viral proteins. Its function is as follows. Protease-polymerase p76 processes the polyprotein: Pro-Pol is first released by autocleavage, then all other proteins are cleaved. Cleaves host translation initiation factor eIF4G1, eIF4G2 and PABP1 thereby inducing a shutdown of host protein synthesis. This shutdown may not prevent viral mRNA from being translated since viral Vpg replaces the cap. It is also an RNA-directed RNA polymerase which replicates genomic and antigenomic viral RNA by recognizing specific signals. Also transcribes a subgenomic mRNA by initiating RNA synthesis internally on antigenomic RNA. This sgRNA codes for structural proteins. Catalyzes the covalent attachment VPg with viral RNAs. Capsid protein self assembles to form an icosahedral capsid with a T=3 symmetry, about 38 nm in diameter, and consisting of 180 capsid proteins. The capsid encapsulate the genomic RNA and VP2 proteins. Attaches virion to target cells, inducing endocytosis of the viral particle. Acidification of the endosome induces conformational change of capsid protein thereby injecting virus genomic RNA into host cytoplasm. This is Genome polyprotein from Porcine enteric sapovirus (isolate Swine/United States/Cowden/1980) (Sw/SV/Cowden/1980/US).